A 308-amino-acid polypeptide reads, in one-letter code: Extended-spectrum beta-lactamase PER-1 (308 aa).

Positions 1–26 (MNVIIKAVVTASTLLMVSFSSFETSA) are cleaved as a signal peptide. Ser-71 acts as the Nucleophile; acyl-ester intermediate in catalysis. Residues Lys-74, Ser-135, and Glu-171 each coordinate a beta-lactam.

It belongs to the class-A beta-lactamase family. As to quaternary structure, monomer.

It is found in the secreted. The enzyme catalyses a beta-lactam + H2O = a substituted beta-amino acid. With respect to regulation, inhibited by the beta-lactamase-blocking agents clavulanic acid, tazobactam and sulbactam. Not inhibited by EDTA. Its function is as follows. Extended-spectrum beta-lactamase (ESBL) which confers resistance to penicillins, as well as first-, second- and third-generation cephalosporins, but not the carbapenem, imipenem, in the JM109 strain of E.coli. Has cefotaxime-hydrolyzing activity. The protein is Extended-spectrum beta-lactamase PER-1 of Pseudomonas aeruginosa.